The following is a 488-amino-acid chain: PTS system mannitol-specific EIICB component (488 aa).

Residues Met-1 to Ile-26 are Cytoplasmic-facing. The PTS EIIC type-2 domain maps to Leu-15–Lys-362. Residues Ile-27–Asp-48 traverse the membrane as a helical segment. The Extracellular segment spans residues Lys-49–Ala-52. Residues Leu-53 to Lys-73 form a helical membrane-spanning segment. The Cytoplasmic segment spans residues Lys-74–Phe-147. A helical transmembrane segment spans residues Tyr-148–Gly-169. Residues Tyr-170–Leu-178 are Extracellular-facing. A helical transmembrane segment spans residues Val-179–Lys-199. Over Val-200–Ala-289 the chain is Cytoplasmic. A helical membrane pass occupies residues Thr-290–Ile-309. Residues Ala-310–Val-331 lie on the Extracellular side of the membrane. Residues Ala-332–Leu-353 form a helical membrane-spanning segment. Over Ser-354–Asn-488 the chain is Cytoplasmic. Residues Ser-397–Asn-488 enclose the PTS EIIB type-2 domain. Cys-403 serves as the catalytic Phosphocysteine intermediate; for EIIB activity. The residue at position 403 (Cys-403) is a Phosphocysteine; by EIIA.

In terms of assembly, homodimer.

It is found in the cell membrane. It carries out the reaction D-mannitol(out) + N(pros)-phospho-L-histidyl-[protein] = D-mannitol 1-phosphate(in) + L-histidyl-[protein]. The phosphoenolpyruvate-dependent sugar phosphotransferase system (sugar PTS), a major carbohydrate active transport system, catalyzes the phosphorylation of incoming sugar substrates concomitantly with their translocation across the cell membrane. The enzyme II CmtAB PTS system is involved in D-mannitol transport. The sequence is that of PTS system mannitol-specific EIICB component (mtlA) from Mycoplasma pneumoniae (strain ATCC 29342 / M129 / Subtype 1) (Mycoplasmoides pneumoniae).